Consider the following 366-residue polypeptide: MGVLAACVLGLLGGLHGSRVEETEEMEMMKEMHEKALDCRFDRSKMEEMERSLERTVGFDTKVLIPVIFHGSKVVASPVTRYWEIEKEERRYTERVIKLLPGLAWHLMVCVYVEGCGDWISDLTHKVFSATSFWRPDLVALYKNGKKRDGMKFVDLVVEVFRRNRCMVGRFGDSLARLAEARLQRISGSLSPGERKKEEEMLWKIKEYGERLCTEKRQEEIVKAQKIMCDACAYIWGRESDRRSFLLEAYSKHLCLRMVDPSVGVEGLLAHCMGHSKLIRTYEEHQVDVAGELVLQVFLGNKDIDDESINNAVREVRERKEAERIRKEEKRIRKEEERAKNEEELLRMVESEEGKSGEGEEGCRRG.

The tract at residues 325-366 (IRKEEKRIRKEEERAKNEEELLRMVESEEGKSGEGEEGCRRG) is disordered.

The protein belongs to the UPF0329 family.

The polypeptide is UPF0329 protein ECU01_0130/ECU01_1480/ECU08_0060 (Encephalitozoon cuniculi (strain GB-M1) (Microsporidian parasite)).